Consider the following 455-residue polypeptide: Serine--tRNA ligase (455 aa).

252–254 (TAE) is a binding site for L-serine. ATP contacts are provided by residues 283–285 (RKE) and Val-299. Glu-306 is an L-serine binding site. An ATP-binding site is contributed by 370-373 (EVVS). Thr-406 contacts L-serine.

This sequence belongs to the class-II aminoacyl-tRNA synthetase family. Type-1 seryl-tRNA synthetase subfamily. In terms of assembly, homodimer. The tRNA molecule binds across the dimer.

The protein resides in the cytoplasm. The catalysed reaction is tRNA(Ser) + L-serine + ATP = L-seryl-tRNA(Ser) + AMP + diphosphate + H(+). It carries out the reaction tRNA(Sec) + L-serine + ATP = L-seryl-tRNA(Sec) + AMP + diphosphate + H(+). It functions in the pathway aminoacyl-tRNA biosynthesis; selenocysteinyl-tRNA(Sec) biosynthesis; L-seryl-tRNA(Sec) from L-serine and tRNA(Sec): step 1/1. Its function is as follows. Catalyzes the attachment of serine to tRNA(Ser). Is also able to aminoacylate tRNA(Sec) with serine, to form the misacylated tRNA L-seryl-tRNA(Sec), which will be further converted into selenocysteinyl-tRNA(Sec). This Thermococcus gammatolerans (strain DSM 15229 / JCM 11827 / EJ3) protein is Serine--tRNA ligase.